A 213-amino-acid polypeptide reads, in one-letter code: Octanoyltransferase (213 aa).

The BPL/LPL catalytic domain maps to 32–207 (ENSHDEIWLV…NILALLNNPP (176 aa)). Substrate is bound by residues 71–78 (RGGQVTYH), 138–140 (SLG), and 151–153 (GLA). C169 serves as the catalytic Acyl-thioester intermediate.

Belongs to the LipB family.

It is found in the cytoplasm. It catalyses the reaction octanoyl-[ACP] + L-lysyl-[protein] = N(6)-octanoyl-L-lysyl-[protein] + holo-[ACP] + H(+). The protein operates within protein modification; protein lipoylation via endogenous pathway; protein N(6)-(lipoyl)lysine from octanoyl-[acyl-carrier-protein]: step 1/2. Its function is as follows. Catalyzes the transfer of endogenously produced octanoic acid from octanoyl-acyl-carrier-protein onto the lipoyl domains of lipoate-dependent enzymes. Lipoyl-ACP can also act as a substrate although octanoyl-ACP is likely to be the physiological substrate. The polypeptide is Octanoyltransferase (Salmonella typhi).